The sequence spans 202 residues: dITP/XTP pyrophosphatase (202 aa).

8–13 (TKNMGK) lines the substrate pocket. Residues E41 and D70 each contribute to the Mg(2+) site. D70 acts as the Proton acceptor in catalysis. Residues S71, 155-158 (FGYD), K178, and 183-184 (HR) each bind substrate.

This sequence belongs to the HAM1 NTPase family. As to quaternary structure, homodimer. It depends on Mg(2+) as a cofactor.

The enzyme catalyses XTP + H2O = XMP + diphosphate + H(+). It carries out the reaction dITP + H2O = dIMP + diphosphate + H(+). It catalyses the reaction ITP + H2O = IMP + diphosphate + H(+). Pyrophosphatase that catalyzes the hydrolysis of nucleoside triphosphates to their monophosphate derivatives, with a high preference for the non-canonical purine nucleotides XTP (xanthosine triphosphate), dITP (deoxyinosine triphosphate) and ITP. Seems to function as a house-cleaning enzyme that removes non-canonical purine nucleotides from the nucleotide pool, thus preventing their incorporation into DNA/RNA and avoiding chromosomal lesions. The chain is dITP/XTP pyrophosphatase from Bacillus anthracis.